The chain runs to 418 residues: Protein fuzzy homolog (418 aa).

The protein belongs to the fuzzy family. As to quaternary structure, interacts with rsg1. Interacts with intu and wdpcp; fuz, intu and wdpcp probably form the core CPLANE (ciliogenesis and planar polarity effectors) complex.

Its subcellular location is the cytoplasm. It localises to the cytoskeleton. The protein localises to the cilium basal body. Probable planar cell polarity effector involved in cilium biogenesis. Proposed to function as core component of the CPLANE (ciliogenesis and planar polarity effectors) complex involved in the recruitment of peripheral IFT-A proteins to basal bodies. May regulate protein and membrane transport to the cilium. May control the organization of the apical actin cytoskeleton, which is essential for the normal orientation of elongating ciliary microtubules. The protein is Protein fuzzy homolog (fuz) of Xenopus tropicalis (Western clawed frog).